A 545-amino-acid polypeptide reads, in one-letter code: T-complex protein 1 subunit gamma (545 aa).

Methionine 1 bears the N-acetylmethionine mark. The interval 1–24 (MMGHRPVLVLSQNTKRESGRKVQS) is disordered. Serine 11 bears the Phosphoserine mark. Lysine 15 participates in a covalent cross-link: Glycyl lysine isopeptide (Lys-Gly) (interchain with G-Cter in SUMO2). An ADP-binding site is contributed by glycine 42. Residue glycine 42 coordinates ATP. Aspartate 93 serves as a coordination point for Mg(2+). ADP-binding residues include glycine 94, threonine 95, threonine 96, serine 97, threonine 162, and lysine 163. Positions 94, 95, and 96 each coordinate ATP. A Phosphoserine modification is found at serine 170. An N6-acetyllysine modification is found at lysine 222. A phosphoserine mark is found at serine 243 and serine 244. The residue at position 247 (tyrosine 247) is a Phosphotyrosine. Residues lysine 248 and lysine 249 each participate in a glycyl lysine isopeptide (Lys-Gly) (interchain with G-Cter in SUMO2) cross-link. Residue serine 252 is modified to Phosphoserine. An intrachain disulfide couples cysteine 366 to cysteine 372. Residue lysine 381 forms a Glycyl lysine isopeptide (Lys-Gly) (interchain with G-Cter in SUMO2) linkage. Glycine 411 contributes to the ADP binding site. Residue glycine 411 participates in ATP binding. 2 positions are modified to phosphothreonine: threonine 430 and threonine 459. Residues glycine 482, glutamate 483, glutamate 497, and lysine 502 each coordinate ADP. Glycine 482 contributes to the ATP binding site. Position 497 (glutamate 497) interacts with ATP. Residues 526–545 (HKKKGDDQSRQGGAPDAGQE) are disordered.

It belongs to the TCP-1 chaperonin family. In terms of assembly, component of the chaperonin-containing T-complex (TRiC), a hexadecamer composed of two identical back-to-back stacked rings enclosing a protein folding chamber. Each ring is made up of eight different subunits: TCP1/CCT1, CCT2, CCT3, CCT4, CCT5, CCT6A/CCT6, CCT7, CCT8. Interacts with PACRG. Interacts with DNAAF4. Interacts with DLEC1.

The protein resides in the cytoplasm. It catalyses the reaction ATP + H2O = ADP + phosphate + H(+). In terms of biological role, component of the chaperonin-containing T-complex (TRiC), a molecular chaperone complex that assists the folding of actin, tubulin and other proteins upon ATP hydrolysis. The TRiC complex mediates the folding of WRAP53/TCAB1, thereby regulating telomere maintenance. As part of the TRiC complex may play a role in the assembly of BBSome, a complex involved in ciliogenesis regulating transports vesicles to the cilia. The polypeptide is T-complex protein 1 subunit gamma (CCT3) (Bos taurus (Bovine)).